The chain runs to 160 residues: Ribosomal RNA large subunit methyltransferase H (160 aa).

Residues Leu76, Gly108, and 127 to 132 each bind S-adenosyl-L-methionine; that span reads LGKMTW.

It belongs to the RNA methyltransferase RlmH family. In terms of assembly, homodimer.

The protein localises to the cytoplasm. It catalyses the reaction pseudouridine(1915) in 23S rRNA + S-adenosyl-L-methionine = N(3)-methylpseudouridine(1915) in 23S rRNA + S-adenosyl-L-homocysteine + H(+). Specifically methylates the pseudouridine at position 1915 (m3Psi1915) in 23S rRNA. In Rhizobium rhizogenes (strain K84 / ATCC BAA-868) (Agrobacterium radiobacter), this protein is Ribosomal RNA large subunit methyltransferase H.